We begin with the raw amino-acid sequence, 553 residues long: MTKFVFVTGGVVSSLGKGIAAASLAAILESRGLKVTLLKLDPYINVDPGTMSPFQHGEVFVTEDGAETDLDLGHYERFVSAKMRKANNFTTGQIYESVIRKERRGEYLGKTVQVIPHITNEIQAFIERGAAASHDGKADVAIVEIGGTVGDIESLPFLEAARQMSLRLGRNQVAFAHLTLVPFIASAGELKTKPTQHSVQKLREIGVQPTALLCRADRPIPDDERAKISLFANMPQDAVISVWDVDTIYKIPQMLNEQGLDRIICEELRIEAPPADLSVWAHMVHTLENPQHEITIGMVGKYVDLTESYKSLIEALRHAGLHTSTRVNIEYIDSEELESGHTQVLDTLDAILVPGGFGKRGTEGKIRAIQYAREKGVPYLGICLGMQLAVIEFARHLAGMKDANSTEFNDETEHPVVALITEWLDRDGRVEKRSADSDLGGTMRLGSQRVPVQSGTKAAAIYGAEVNERHRHRYEVNNHYVPQLEKAGMIISARTPSENLPEMMELPASMHPWFVGVQFHPEFTSTPRDGHPLFKAYVEAALAHQQNTQRAAA.

The segment at 1–270 (MTKFVFVTGG…DRIICEELRI (270 aa)) is amidoligase domain. Ser-13 is a CTP binding site. Ser-13 serves as a coordination point for UTP. ATP contacts are provided by residues 14–19 (SLGKGI) and Asp-71. Mg(2+) is bound by residues Asp-71 and Glu-144. CTP is bound by residues 151-153 (DIE), 191-196 (KTKPTQ), and Lys-227. Residues 191–196 (KTKPTQ) and Lys-227 contribute to the UTP site. The 253-residue stretch at 295 to 547 (TIGMVGKYVD…VEAALAHQQN (253 aa)) folds into the Glutamine amidotransferase type-1 domain. L-glutamine is bound at residue Gly-356. The Nucleophile; for glutamine hydrolysis role is filled by Cys-383. L-glutamine is bound by residues 384-387 (LGMQ), Glu-407, and Arg-473. Active-site residues include His-520 and Glu-522.

This sequence belongs to the CTP synthase family. As to quaternary structure, homotetramer.

The enzyme catalyses UTP + L-glutamine + ATP + H2O = CTP + L-glutamate + ADP + phosphate + 2 H(+). It carries out the reaction L-glutamine + H2O = L-glutamate + NH4(+). It catalyses the reaction UTP + NH4(+) + ATP = CTP + ADP + phosphate + 2 H(+). Its pathway is pyrimidine metabolism; CTP biosynthesis via de novo pathway; CTP from UDP: step 2/2. With respect to regulation, allosterically activated by GTP, when glutamine is the substrate; GTP has no effect on the reaction when ammonia is the substrate. The allosteric effector GTP functions by stabilizing the protein conformation that binds the tetrahedral intermediate(s) formed during glutamine hydrolysis. Inhibited by the product CTP, via allosteric rather than competitive inhibition. Its function is as follows. Catalyzes the ATP-dependent amination of UTP to CTP with either L-glutamine or ammonia as the source of nitrogen. Regulates intracellular CTP levels through interactions with the four ribonucleotide triphosphates. This Ralstonia pickettii (strain 12J) protein is CTP synthase.